A 393-amino-acid chain; its full sequence is Probable acetyl-CoA acyltransferase (393 aa).

Cys88 functions as the Acyl-thioester intermediate in the catalytic mechanism. Residues His349 and Cys378 each act as proton acceptor in the active site.

This sequence belongs to the thiolase-like superfamily. Thiolase family.

Its subcellular location is the cytoplasm. The enzyme catalyses 2 acetyl-CoA = acetoacetyl-CoA + CoA. This is Probable acetyl-CoA acyltransferase from Staphylococcus aureus (strain MRSA252).